The chain runs to 122 residues: Vitelline membrane protein 15a-3 (122 aa).

Residues 1-17 form the signal peptide; it reads MNKFIILALFAVAAASA. A compositionally biased stretch (pro residues) spans 21-49; sequence YPPPPPKPYHAPPPPPHHAHPPPPPPPPA. Disordered regions lie at residues 21 to 63 and 103 to 122; these read YPPP…APVV and PAPA…QFEE. In terms of domain architecture, VM spans 69–109; the sequence is HAPHAKCGANLLVGCAPSVAHAPCVPLHGHGHGYPAPAPHY.

It belongs to the vitelline membrane protein family. Expressed in the middle and posterior regions of the follicle cells.

The protein resides in the secreted. The chain is Vitelline membrane protein 15a-3 from Aedes aegypti (Yellowfever mosquito).